A 292-amino-acid chain; its full sequence is Acetyl-coenzyme A carboxylase carboxyl transferase subunit beta (292 aa).

A CoA carboxyltransferase N-terminal domain is found at 29-292; that stretch reads LWVKCSECGQ…HGVKDLMGAN (264 aa). The Zn(2+) site is built by Cys-33, Cys-36, Cys-52, and Cys-55. The C4-type zinc-finger motif lies at 33–55; it reads CSECGQVAYRKDLISNFNVCSNC.

It belongs to the AccD/PCCB family. In terms of assembly, acetyl-CoA carboxylase is a heterohexamer composed of biotin carboxyl carrier protein (AccB), biotin carboxylase (AccC) and two subunits each of ACCase subunit alpha (AccA) and ACCase subunit beta (AccD). Zn(2+) is required as a cofactor.

The protein localises to the cytoplasm. The catalysed reaction is N(6)-carboxybiotinyl-L-lysyl-[protein] + acetyl-CoA = N(6)-biotinyl-L-lysyl-[protein] + malonyl-CoA. The protein operates within lipid metabolism; malonyl-CoA biosynthesis; malonyl-CoA from acetyl-CoA: step 1/1. In terms of biological role, component of the acetyl coenzyme A carboxylase (ACC) complex. Biotin carboxylase (BC) catalyzes the carboxylation of biotin on its carrier protein (BCCP) and then the CO(2) group is transferred by the transcarboxylase to acetyl-CoA to form malonyl-CoA. The protein is Acetyl-coenzyme A carboxylase carboxyl transferase subunit beta of Prochlorococcus marinus (strain MIT 9515).